The chain runs to 140 residues: Nucleoside diphosphate kinase (140 aa).

Residues Lys-11, Phe-59, Arg-87, Thr-93, Arg-104, and Asn-114 each coordinate ATP. His-117 (pros-phosphohistidine intermediate) is an active-site residue.

Belongs to the NDK family. Homotetramer. It depends on Mg(2+) as a cofactor.

The protein localises to the cytoplasm. It carries out the reaction a 2'-deoxyribonucleoside 5'-diphosphate + ATP = a 2'-deoxyribonucleoside 5'-triphosphate + ADP. It catalyses the reaction a ribonucleoside 5'-diphosphate + ATP = a ribonucleoside 5'-triphosphate + ADP. Its function is as follows. Major role in the synthesis of nucleoside triphosphates other than ATP. The ATP gamma phosphate is transferred to the NDP beta phosphate via a ping-pong mechanism, using a phosphorylated active-site intermediate. In Erythrobacter litoralis (strain HTCC2594), this protein is Nucleoside diphosphate kinase.